The primary structure comprises 156 residues: Small ribosomal subunit protein uS7 (156 aa).

It belongs to the universal ribosomal protein uS7 family. As to quaternary structure, part of the 30S ribosomal subunit. Contacts proteins S9 and S11.

Functionally, one of the primary rRNA binding proteins, it binds directly to 16S rRNA where it nucleates assembly of the head domain of the 30S subunit. Is located at the subunit interface close to the decoding center, probably blocks exit of the E-site tRNA. This is Small ribosomal subunit protein uS7 from Bordetella bronchiseptica (strain ATCC BAA-588 / NCTC 13252 / RB50) (Alcaligenes bronchisepticus).